Here is a 251-residue protein sequence, read N- to C-terminus: Early E1A protein (251 aa).

Residues 38–46 (ISLHNLFDV) are interaction with RB1 in competition with E2F1. The interval 74-136 (SADSGAASGD…NYVNIAEGAS (63 aa)) is interaction with UBE2I. The LXCXE motif, interaction with host RB1 and TMEM173/STING motif lies at 97 to 101 (LKCYE). A disordered region spans residues 102–122 (EGLPPSGSEADEAEERAEEEE). Residues 110–122 (EADEAEERAEEEE) are compositionally biased toward acidic residues. A zinc finger lies at 150 to 170 (CRACDFHRGSSGNPEAMCALC). The short motif at 240 to 244 (PLNLS) is the PXDLS motif, CTBP-binding element. Positions 246 to 250 (KRPKS) match the Nuclear localization signal motif.

This sequence belongs to the adenoviridae E1A protein family. Interacts with host UBE2I; this interaction interferes with polySUMOylation. Interacts with host RB1; this interaction induces the aberrant dissociation of RB1-E2F1 complex thereby disrupting the activity of RB1 and activating E2F1-regulated genes. Interacts with host ATF7; the interaction enhances ATF7-mediated viral transactivation activity which requires the zinc binding domains of both proteins. Isoform early E1A 32 kDa protein and isoform early E1A 26 kDa protein interact (via N-terminus) with CUL1 and E3 ubiquitin ligase RBX1; these interactions inhibit RBX1-CUL1-dependent elongation reaction of ubiquitin chains and attenuate ubiquitination of SCF(FBXW7) target proteins. Interacts (via PXLXP motif) with host ZMYND11/BS69 (via MYND-type zinc finger); this interaction inhibits E1A mediated transactivation. Interacts with host EP300; this interaction stimulates the acetylation of RB1 by recruiting EP300 and RB1 into a multimeric-protein complex. Interacts with host CTBP1 and CTBP2; this interaction seems to potentiate viral replication. Interacts with host DCAF7. Interacts with host DYRK1A. Interacts with host KPNA4; this interaction allows E1A import into the host nucleus. Interacts with host EP400; this interaction stabilizes MYC. Interacts with host TBP protein; this interaction probably disrupts the TBP-TATA complex. Interacts (via LXCXE motif) with host TMEM173/STING; this interaction impairs the ability of TMEM173/STING to sense cytosolic DNA and promote the production of type I interferon (IFN-alpha and IFN-beta). Interacts (via C-terminus) with host ZBED1/hDREF (via C-terminus); the interaction is direct.

It is found in the host nucleus. Plays a role in viral genome replication by driving entry of quiescent cells into the cell cycle. Stimulation of progression from G1 to S phase allows the virus to efficiently use the cellular DNA replicating machinery to achieve viral genome replication. E1A protein has both transforming and trans-activating activities. Induces the disassembly of the E2F1 transcription factor from RB1 by direct competition for the same binding site on RB1, with subsequent transcriptional activation of E2F1-regulated S-phase genes and of the E2 region of the adenoviral genome. Release of E2F1 leads to the ARF-mediated inhibition of MDM2 and causes TP53/p53 to accumulate because it is not targeted for degradation by MDM2-mediated ubiquitination anymore. This increase in TP53, in turn, would arrest the cell proliferation and direct its death but this effect is counteracted by the viral protein E1B-55K. Inactivation of the ability of RB1 to arrest the cell cycle is critical for cellular transformation, uncontrolled cellular growth and proliferation induced by viral infection. Interaction with RBX1 and CUL1 inhibits ubiquitination of the proteins targeted by SCF(FBXW7) ubiquitin ligase complex, and may be linked to unregulated host cell proliferation. The tumorigenesis-restraining activity of E1A may be related to the disruption of the host CtBP-CtIP complex through the CtBP binding motif. Interaction with host TMEM173/STING impairs the ability of TMEM173/STING to sense cytosolic DNA and promote the production of type I interferon (IFN-alpha and IFN-beta). Promotes the sumoylation of host ZBED1/hDREF with SUMO1. This is Early E1A protein from Human adenovirus F serotype 41 (HAdV-41).